The primary structure comprises 148 residues: FAD synthase (148 aa).

ATP is bound by residues threonine 11–phenylalanine 12, histidine 16–histidine 19, asparagine 94, and tyrosine 121.

The protein belongs to the archaeal FAD synthase family. As to quaternary structure, homodimer. A divalent metal cation serves as cofactor.

The catalysed reaction is FMN + ATP + H(+) = FAD + diphosphate. It participates in cofactor biosynthesis; FAD biosynthesis; FAD from FMN: step 1/1. Functionally, catalyzes the transfer of the AMP portion of ATP to flavin mononucleotide (FMN) to produce flavin adenine dinucleotide (FAD) coenzyme. The chain is FAD synthase from Methanoregula boonei (strain DSM 21154 / JCM 14090 / 6A8).